We begin with the raw amino-acid sequence, 58 residues long: Amyloid-beta precursor protein (58 aa).

Over 1–34 the chain is Extracellular; it reads ISEVKMDAEFRHDSGYEVHHQKLVFFAEDVGSNK. Residues His-12, Tyr-16, His-19, and His-20 each coordinate Cu(2+). 4 residues coordinate Zn(2+): His-12, Tyr-16, His-19, and His-20. Residues 35 to 58 form a helical membrane-spanning segment; it reads GAIIGLMVGGVVIATVIVITLVML.

Belongs to the APP family. Binds, via its C-terminus, to the PID domain of several cytoplasmic proteins, including APBB family members, the APBA family, MAPK8IP1, SHC1 and NUMB and DAB1. Binding to DAB1 inhibits its serine phosphorylation. Interacts (via NPXY motif) with DAB2 (via PID domain); the interaction is impaired by tyrosine phosphorylation of the NPXY motif. Also interacts with GPCR-like protein BPP, APPBP1, IB1, KNS2 (via its TPR domains), APPBP2 (via BaSS) and DDB1. In vitro, it binds MAPT via the MT-binding domains. Associates with microtubules in the presence of ATP and in a kinesin-dependent manner. Interacts, through a C-terminal domain, with GNAO1. Interacts with CPEB1, ANKS1B and AGER. Interacts with ITM2B. Interacts with ITM2C. Interacts with IDE. Can form homodimers; dimerization is enhanced in the presence of Cu(2+) ions. Can form homodimers; this is promoted by heparin binding. Interacts with SORL1 (via N-terminal ectodomain); this interaction retains APP in the trans-Golgi network and reduces processing into soluble APP-alpha and amyloid-beta peptides. Interacts with PLD3. Interacts with VDAC1. Interacts with NSG1; could regulate APP processing. Amyloid-beta protein 42 interacts with FPR2. Interacts with LRRK2. Interacts (via cytoplasmic domain) with KIF5B. Interacts (via C-terminus) with APBB2/FE65L1 (via C-terminus). Interacts (via intracellular domain) with APBB3. In terms of processing, proteolytically processed under normal cellular conditions. Cleavage either by alpha-secretase, beta-secretase or theta-secretase leads to generation and extracellular release of soluble APP peptides, S-APP-alpha and S-APP-beta, and the retention of corresponding membrane-anchored C-terminal fragments, C80, C83 and C99. Subsequent processing of C80 and C83 by gamma-secretase yields P3 peptides. This is the major secretory pathway and is non-amyloidogenic. Alternatively, presenilin/nicastrin-mediated gamma-secretase processing of C99 releases the amyloid-beta proteins, amyloid-beta protein 40 and amyloid-beta protein 42, major components of amyloid plaques, and the cytotoxic C-terminal fragments, gamma-CTF(50), gamma-CTF(57) and gamma-CTF(59). PSEN1 cleavage is more efficient with C83 than with C99 as substrate (in vitro). Amyloid-beta protein 40 and Amyloid-beta protein 42 are cleaved by ACE. Many other minor amyloid-beta peptides, amyloid-beta 1-X peptides, are found in cerebral spinal fluid (CSF) including the amyloid-beta X-15 peptides, produced from the cleavage by alpha-secretase.

The protein resides in the cell membrane. The protein localises to the membrane. Its subcellular location is the perikaryon. It localises to the cell projection. It is found in the growth cone. The protein resides in the clathrin-coated pit. The protein localises to the early endosome. Its subcellular location is the cytoplasmic vesicle. It localises to the secreted. It is found in the cell surface. The protein resides in the nucleus. The protein localises to the cytoplasm. Functions as a cell surface receptor and performs physiological functions on the surface of neurons relevant to neurite growth, neuronal adhesion and axonogenesis. Interaction between APP molecules on neighboring cells promotes synaptogenesis. Involved in cell mobility and transcription regulation through protein-protein interactions. Can promote transcription activation through binding to APBB1-KAT5 and inhibit Notch signaling through interaction with Numb. Couples to apoptosis-inducing pathways such as those mediated by G(o) and JIP. Inhibits G(o)-alpha ATPase activity. Acts as a kinesin I membrane receptor, mediating the axonal transport of beta-secretase and presenilin 1. By acting as a kinesin I membrane receptor, plays a role in axonal anterograde transport of cargo towards synapses in axons. May be involved in copper homeostasis/oxidative stress through copper ion reduction. In vitro, copper-metallated APP induces neuronal death directly or is potentiated through Cu(2+)-mediated low-density lipoprotein oxidation. Can regulate neurite outgrowth through binding to components of the extracellular matrix such as heparin and collagen I and IV. Induces a AGER-dependent pathway that involves activation of p38 MAPK, resulting in internalization of amyloid-beta peptide and mitochondrial dysfunction in cultured cortical neurons. Provides Cu(2+) ions for GPC1 which are required for release of nitric oxide (NO) and subsequent degradation of the heparan sulfate chains on GPC1. The polypeptide is Amyloid-beta precursor protein (APP) (Canis lupus familiaris (Dog)).